We begin with the raw amino-acid sequence, 480 residues long: Trigger factor (480 aa).

Positions 169 to 264 (GDIAVVDFKG…LKELKEKELP (96 aa)) constitute a PPIase FKBP-type domain. The segment at 441–480 (PEGSLSPAEETEAAESDADADVSQTEQENSEPSTTEVTEG) is disordered. The segment covering 449 to 460 (EETEAAESDADA) has biased composition (acidic residues). Residues 462-480 (VSQTEQENSEPSTTEVTEG) show a composition bias toward polar residues.

It belongs to the FKBP-type PPIase family. Tig subfamily.

It is found in the cytoplasm. The enzyme catalyses [protein]-peptidylproline (omega=180) = [protein]-peptidylproline (omega=0). Involved in protein export. Acts as a chaperone by maintaining the newly synthesized protein in an open conformation. Functions as a peptidyl-prolyl cis-trans isomerase. This is Trigger factor from Nostoc punctiforme (strain ATCC 29133 / PCC 73102).